The following is a 241-amino-acid chain: Small ribosomal subunit protein bS6 (241 aa).

The span at 97–108 shows a compositional bias: basic residues; sequence KPKIRERNRKYT. Positions 97–241 are disordered; the sequence is KPKIRERNRK…YNNKKPQSSN (145 aa). Positions 109-118 are enriched in basic and acidic residues; that stretch reads LRRDRFDKPN. 2 stretches are compositionally biased toward low complexity: residues 130–151 and 161–182; these read QDQQ…QASQ and DDFQ…NQSG. The span at 183-193 shows a compositional bias: basic and acidic residues; it reads YHRENNRHNQE. Positions 194–210 are enriched in low complexity; sequence NMHQNNKNHQNQTSQTQ.

The protein belongs to the bacterial ribosomal protein bS6 family.

Its function is as follows. Binds together with bS18 to 16S ribosomal RNA. The polypeptide is Small ribosomal subunit protein bS6 (Mesomycoplasma hyopneumoniae (strain J / ATCC 25934 / NCTC 10110) (Mycoplasma hyopneumoniae)).